A 43-amino-acid chain; its full sequence is Neurotrophin-3 (43 aa).

Belongs to the NGF-beta family.

It is found in the secreted. Its function is as follows. Seems to promote the survival of visceral and proprioceptive sensory neurons. In Raja clavata (Thornback ray), this protein is Neurotrophin-3 (ntf3).